The sequence spans 367 residues: Ribosomal lysine N-methyltransferase 5 (367 aa).

The interval Glu-55–Glu-74 is disordered. A compositionally biased stretch (basic residues) spans Arg-58–Lys-68. Residues Trp-110, Gly-170–Gly-172, Asp-192, Trp-256, and Met-288 contribute to the S-adenosyl-L-methionine site.

The protein belongs to the class I-like SAM-binding methyltransferase superfamily. RKM5 family.

S-adenosyl-L-methionine-dependent protein-lysine N-methyltransferase that monomethylates 60S ribosomal protein L1 (RPL1A and RPL1B) at 'Lys-46'. The polypeptide is Ribosomal lysine N-methyltransferase 5 (RKM5) (Saccharomyces cerevisiae (strain Lalvin EC1118 / Prise de mousse) (Baker's yeast)).